The sequence spans 121 residues: Flagellar protein FliT (121 aa).

The segment at 1-50 is required for homodimerization; it reads MNHAPHLYFAWQQLVEKSQLMLRLATEEQWDELIASEMAYVNAVQEIAHL. Residues 60 to 98 form a fliD binding region; that stretch reads MQEQLRPMLRLILDNESKVKQLLQIRMDELAKLVGQSSV.

This sequence belongs to the FliT family. As to quaternary structure, homodimer. Interacts with FliD and FlhC.

The protein localises to the cytoplasm. Its subcellular location is the cytosol. Functionally, dual-function protein that regulates the transcription of class 2 flagellar operons and that also acts as an export chaperone for the filament-capping protein FliD. As a transcriptional regulator, acts as an anti-FlhDC factor; it directly binds FlhC, thus inhibiting the binding of the FlhC/FlhD complex to class 2 promoters, resulting in decreased expression of class 2 flagellar operons. As a chaperone, effects FliD transition to the membrane by preventing its premature polymerization, and by directing it to the export apparatus. The protein is Flagellar protein FliT of Escherichia coli (strain ATCC 8739 / DSM 1576 / NBRC 3972 / NCIMB 8545 / WDCM 00012 / Crooks).